A 218-amino-acid polypeptide reads, in one-letter code: Protein-lysine N-methyltransferase M142.8 (218 aa).

This sequence belongs to the class I-like SAM-binding methyltransferase superfamily. EFM5 family.

The protein localises to the cytoplasm. S-adenosyl-L-methionine-dependent protein-lysine N-methyltransferase that methylates elongation factor 1-alpha. The protein is Protein-lysine N-methyltransferase M142.8 of Caenorhabditis elegans.